The sequence spans 621 residues: Chaperone protein HtpG (621 aa).

The segment at 1 to 341 (MSNQEYTFQT…SEDLPLNVSR (341 aa)) is a; substrate-binding. Positions 342–547 (EILQQNKILA…GDEQNAMMAN (206 aa)) are b. The interval 548 to 621 (WMRQMGQSVP…RLNSVLLKAL (74 aa)) is c.

Belongs to the heat shock protein 90 family. In terms of assembly, homodimer.

It is found in the cytoplasm. Its function is as follows. Molecular chaperone. Has ATPase activity. The chain is Chaperone protein HtpG from Helicobacter pylori (strain ATCC 700392 / 26695) (Campylobacter pylori).